The sequence spans 268 residues: Protein MGF 300-1L (268 aa).

The Cytoplasmic segment spans residues 1–175 (MVSLTTCCLK…QTFKTFYAKN (175 aa)). Residues 176-193 (YSLSTLYCIFLAIYYKLY) form a helical membrane-spanning segment. The Extracellular portion of the chain corresponds to 194-268 (TALRKMVKIY…MYAFSQNDYW (75 aa)). Asn227 carries an N-linked (GlcNAc...) asparagine; by host glycan.

Belongs to the asfivirus MGF 300 family.

It is found in the host membrane. In terms of biological role, plays a role in virus cell tropism, and may be required for efficient virus replication in macrophages. This African swine fever virus (strain Badajoz 1971 Vero-adapted) (Ba71V) protein is Protein MGF 300-1L.